Consider the following 166-residue polypeptide: Protein SprT (166 aa).

A SprT-like domain is found at 19–164; it reads REHLAKANLK…CVHCGDLLVA (146 aa). His78 contributes to the Zn(2+) binding site. Residue Glu79 is part of the active site. His82 is a Zn(2+) binding site.

It belongs to the SprT family. Requires Zn(2+) as cofactor.

Its subcellular location is the cytoplasm. This is Protein SprT from Klebsiella pneumoniae (strain 342).